A 131-amino-acid polypeptide reads, in one-letter code: Translation initiation factor 5A (131 aa).

A Hypusine modification is found at Lys37.

This sequence belongs to the eIF-5A family.

The protein resides in the cytoplasm. In terms of biological role, functions by promoting the formation of the first peptide bond. This chain is Translation initiation factor 5A (eIF5A), found in Methanococcus aeolicus (strain ATCC BAA-1280 / DSM 17508 / OCM 812 / Nankai-3).